We begin with the raw amino-acid sequence, 476 residues long: Probable isoprenylcysteine alpha-carbonyl methylesterase ICMEL1 (476 aa).

A compositionally biased stretch (polar residues) spans N92–T104. Residues N92–T116 form a disordered region. Helical transmembrane passes span F153–Y173 and V208–L228. Residues G214 to A216 and Q285 to A287 each bind substrate. Catalysis depends on residues S286, D388, and H420.

It belongs to the AB hydrolase superfamily. Isoprenylcysteine methylesterase family. Expressed in roots, rosette and cauline leaves, stems, flowers and siliques.

Its subcellular location is the endoplasmic reticulum membrane. The protein localises to the golgi apparatus membrane. It carries out the reaction [protein]-C-terminal S-[(2E,6E)-farnesyl]-L-cysteine methyl ester + H2O = [protein]-C-terminal S-[(2E,6E)-farnesyl]-L-cysteine + methanol + H(+). Functionally, catalyzes the demethylation of isoprenylcysteine methylesters. May be involved in the regulation of ABA signaling. This chain is Probable isoprenylcysteine alpha-carbonyl methylesterase ICMEL1, found in Arabidopsis thaliana (Mouse-ear cress).